The primary structure comprises 209 residues: Regulator of G-protein signaling 1 (209 aa).

Positions 85–200 constitute an RGS domain; it reads SLEKLLANQT…LKSDIYLNLL (116 aa).

In terms of assembly, interacts with GNAI1 and GNAQ. As to expression, detected in peripheral blood monocytes. Expression is relatively low in B-cells and chronic lymphocytic leukemia B-cells; however, in other types of malignant B-cell such as non-Hodgkin lymphoma and hairy cell leukemia, expression is constitutively high.

Its subcellular location is the cell membrane. It localises to the cytoplasm. The protein resides in the cytosol. Functionally, regulates G protein-coupled receptor signaling cascades, including signaling downstream of the N-formylpeptide chemoattractant receptors and leukotriene receptors. Inhibits B cell chemotaxis toward CXCL12. Inhibits signal transduction by increasing the GTPase activity of G protein alpha subunits thereby driving them into their inactive GDP-bound form. The protein is Regulator of G-protein signaling 1 (RGS1) of Homo sapiens (Human).